Consider the following 371-residue polypeptide: Histidinol-phosphate aminotransferase (371 aa).

Lys228 bears the N6-(pyridoxal phosphate)lysine mark.

The protein belongs to the class-II pyridoxal-phosphate-dependent aminotransferase family. Histidinol-phosphate aminotransferase subfamily. In terms of assembly, homodimer. Pyridoxal 5'-phosphate is required as a cofactor.

It carries out the reaction L-histidinol phosphate + 2-oxoglutarate = 3-(imidazol-4-yl)-2-oxopropyl phosphate + L-glutamate. Its pathway is amino-acid biosynthesis; L-histidine biosynthesis; L-histidine from 5-phospho-alpha-D-ribose 1-diphosphate: step 7/9. This Thermosynechococcus vestitus (strain NIES-2133 / IAM M-273 / BP-1) protein is Histidinol-phosphate aminotransferase.